A 535-amino-acid chain; its full sequence is MRRENARVVALPLFRTSWMVIALALVAYGAILAGSIIPTMTGAAVSSIATAVLGGALAMYTGMRTRAAPVRLGGRATAARRSYLTLAFAAVGMLYLAVVAGALNTSAGTLWTCQTWPGCEASGSGDWPALAHRGLAGVATILIAALAMQTWRIRHERALRVAVACALGLMLVQNIVGLVQVLLAQAGESLPLAVARLTHLGLSATAWGALVVLVTLALRRPFPSVVAAPSPATVARPGLTDTTLLEGKPSLLKDYVSLTKPGVISLLILTTITSMYITPAGIPEWSLVLWTTIGGWLMASGSHSINCYLDKDIDINMGRTSRRPIPSGRIPAWHALALGVVLGMIAFAILAIFVNMLTALLALAGFFYYVVIYTIWLKRTSKHNIVIGGGAGAFPPLVGWAAVTGSLAPEALLLWLIVFFWTPPHFWALALIREKDYARAGVPMLPVVAGDVETRRQIVLYTLSMLALTALPPLLGMLGWSYLLMASIFGGLFLYYALKLRRDGTTATAWALYKYSLLYLALLFVAMVVDRAVFA.

Positions 1 to 263 are unknown; that stretch reads MRRENARVVA…DYVSLTKPGV (263 aa). A run of 14 helical transmembrane segments spans residues 18-38, 40-60, 83-103, 127-147, 163-183, 197-217, 262-282, 285-305, 334-354, 357-377, 385-405, 412-432, 474-494, and 509-529; these read WMVIALALVAYGAILAGSIIP, MTGAAVSSIATAVLGGALAMY, YLTLAFAAVGMLYLAVVAGAL, WPALAHRGLAGVATILIAALA, VACALGLMLVQNIVGLVQVLL, LTHLGLSATAWGALVVLVTLA, GVISLLILTTITSMYITPAGI, WSLVLWTTIGGWLMASGSHSI, HALALGVVLGMIAFAILAIFV, LTALLALAGFFYYVVIYTIWL, IVIGGGAGAFPPLVGWAAVTG, LLLWLIVFFWTPPHFWALALI, LLGMLGWSYLLMASIFGGLFL, and AWALYKYSLLYLALLFVAMVV. Residues 264–535 are protoheme IX prenyltransferase; that stretch reads ISLLILTTIT…AMVVDRAVFA (272 aa).

It in the C-terminal section; belongs to the UbiA prenyltransferase family. Protoheme IX farnesyltransferase subfamily.

Its subcellular location is the cell membrane. It catalyses the reaction heme b + (2E,6E)-farnesyl diphosphate + H2O = Fe(II)-heme o + diphosphate. Its pathway is porphyrin-containing compound metabolism; heme O biosynthesis; heme O from protoheme: step 1/1. Converts heme B (protoheme IX) to heme O by substitution of the vinyl group on carbon 2 of heme B porphyrin ring with a hydroxyethyl farnesyl side group. The chain is Protoheme IX farnesyltransferase (ctaB) from Roseiflexus castenholzii (strain DSM 13941 / HLO8).